Reading from the N-terminus, the 465-residue chain is Macrophage metalloelastase (465 aa).

The first 21 residues, 1-21, serve as a signal peptide directing secretion; sequence MKFLLVLVLLVSLQVSACGAA. Residues 22 to 101 constitute a propeptide, activation peptide; it reads PMNESEFAEW…DVQHLRAVPQ (80 aa). The Cysteine switch motif lies at 86–93; that stretch reads SRCGVPDV. Cysteine 88 lines the Zn(2+) pocket. Positions 120 and 154 each coordinate Ca(2+). 2 residues coordinate Zn(2+): histidine 164 and aspartate 166. 4 residues coordinate Ca(2+): aspartate 171, glycine 172, glycine 174, and threonine 176. Histidine 179 contacts Zn(2+). Ca(2+) contacts are provided by glycine 186 and aspartate 190. Residue histidine 192 participates in Zn(2+) binding. Ca(2+) is bound by residues aspartate 194, glutamate 195, and glutamate 197. Histidine 214 is a Zn(2+) binding site. Residue glutamate 215 is part of the active site. Zn(2+) contacts are provided by histidine 218 and histidine 224. A disulfide bond links cysteine 278 and cysteine 465. 4 Hemopexin repeats span residues 281–324, 325–371, 373–421, and 422–465; these read SLSF…WPTI, PSGI…GFPA, VKKI…FPGI, and RPKI…WFGC. Aspartate 285 lines the Ca(2+) pocket. Asparagine 313 carries N-linked (GlcNAc...) asparagine glycosylation. Ca(2+) contacts are provided by aspartate 377 and aspartate 426.

This sequence belongs to the peptidase M10A family. Ca(2+) serves as cofactor. It depends on Zn(2+) as a cofactor.

Its subcellular location is the secreted. The protein localises to the extracellular space. It localises to the extracellular matrix. It carries out the reaction Hydrolysis of soluble and insoluble elastin. Specific cleavages are also produced at 14-Ala-|-Leu-15 and 16-Tyr-|-Leu-17 in the B chain of insulin.. Its function is as follows. May be involved in tissue injury and remodeling. Has significant elastolytic activity. Can accept large and small amino acids at the P1' site, but has a preference for leucine. Aromatic or hydrophobic residues are preferred at the P1 site, with small hydrophobic residues (preferably alanine) occupying P3. In Rattus norvegicus (Rat), this protein is Macrophage metalloelastase (Mmp12).